The sequence spans 885 residues: Probable LRR receptor-like serine/threonine-protein kinase At1g51820 (885 aa).

The N-terminal stretch at 1 to 20 (MERHFVFIATYLLIFHLVQA) is a signal peptide. The Extracellular segment spans residues 21–509 (QNQTGFISVD…GHKKKSVIVP (489 aa)). 13 N-linked (GlcNAc...) asparagine glycosylation sites follow: Asn22, Asn93, Asn135, Asn194, Asn228, Asn250, Asn254, Asn281, Asn287, Asn424, Asn437, Asn456, and Asn461. LRR repeat units lie at residues 403–424 (IITSLDLSSSGLTGIITQAIKN), 427–447 (HLQILDLSDNNLTGEVPEFLA), and 451–473 (SLLVINLSGNNLSGSVPPSLLQK). A helical membrane pass occupies residues 510–530 (VVASIASIAVLIGALVLFLIL). Topologically, residues 531-885 (RKKRSPKVEG…FGTEVSPNAR (355 aa)) are cytoplasmic. Residues 578–851 (NNFQRILGKG…QVVIELNECL (274 aa)) enclose the Protein kinase domain. ATP-binding positions include 584-592 (LGKGGFGMV) and Lys606. Phosphotyrosine is present on Tyr651. Asp703 functions as the Proton acceptor in the catalytic mechanism. Ser737 carries the phosphoserine modification. Phosphothreonine occurs at positions 738 and 743. A Phosphotyrosine modification is found at Tyr751.

This sequence belongs to the protein kinase superfamily. Ser/Thr protein kinase family.

It is found in the membrane. It catalyses the reaction L-seryl-[protein] + ATP = O-phospho-L-seryl-[protein] + ADP + H(+). It carries out the reaction L-threonyl-[protein] + ATP = O-phospho-L-threonyl-[protein] + ADP + H(+). The polypeptide is Probable LRR receptor-like serine/threonine-protein kinase At1g51820 (Arabidopsis thaliana (Mouse-ear cress)).